Here is a 65-residue protein sequence, read N- to C-terminus: UPF0434 protein HSM_0997 (65 aa).

It belongs to the UPF0434 family.

The chain is UPF0434 protein HSM_0997 from Histophilus somni (strain 2336) (Haemophilus somnus).